Reading from the N-terminus, the 223-residue chain is Glycolipid transfer protein 2 (223 aa).

A ganglioside GM3 (d18:1(4E))-binding residues include aspartate 69, asparagine 73, tryptophan 116, and histidine 155.

This sequence belongs to the GLTP family.

In terms of biological role, transfers glycolipids in vitro. This Arabidopsis thaliana (Mouse-ear cress) protein is Glycolipid transfer protein 2.